Here is a 341-residue protein sequence, read N- to C-terminus: THO complex subunit 6 homolog (341 aa).

WD repeat units follow at residues 22–61, 74–112, 124–165, 166–205, 215–254, 256–293, and 295–339; these read RLHM…SSEA, AHDG…GCKE, LEVP…RALR, GHTD…EVQT, SRPH…PTTV, PIRA…KAQV, and GSSP…AFSL. The residue at position 180 (serine 180) is a Phosphoserine.

It belongs to the WD repeat THOC6 family. In terms of assembly, component of the THO subcomplex, which is composed of THOC1, THOC2, THOC3, THOC5, THOC6 and THOC7. The THO subcomplex interacts with DDX39B to form the THO-DDX39B complex which multimerizes into a 28-subunit tetrameric assembly. Component of the transcription/export (TREX) complex at least composed of ALYREF/THOC4, DDX39B, SARNP/CIP29, CHTOP and the THO subcomplex; in the complex interacts with THOC5; together with THOC5 and THOC7, plays a key structural role in the oligomerization of the THO-DDX39B complex. TREX seems to have a dynamic structure involving ATP-dependent remodeling.

The protein localises to the nucleus. Its subcellular location is the nucleus speckle. Functionally, component of the THO subcomplex of the TREX complex which is thought to couple mRNA transcription, processing and nuclear export, and which specifically associates with spliced mRNA and not with unspliced pre-mRNA. Plays a key structural role in the oligomerization of the THO-DDX39B complex. TREX is recruited to spliced mRNAs by a transcription-independent mechanism, binds to mRNA upstream of the exon-junction complex (EJC) and is recruited in a splicing- and cap-dependent manner to a region near the 5' end of the mRNA where it functions in mRNA export to the cytoplasm via the TAP/NXF1 pathway. Plays a role in apoptosis negative control involved in brain development. This Mus musculus (Mouse) protein is THO complex subunit 6 homolog (Thoc6).